Consider the following 424-residue polypeptide: Protein-glutamate methylesterase/protein-glutamine glutaminase (424 aa).

The Response regulatory domain occupies 6–123; it reads RVLVVDDSAF…SLDDFTRQLT (118 aa). Aspartate 57 carries the post-translational modification 4-aspartylphosphate. The interval 177 to 210 is disordered; the sequence is SRLSPGRSPGGKEGVAGAVSAGSTRGEAIRPGKG. One can recognise a CheB-type methylesterase domain in the interval 229–423; sequence RRPGIEVVAI…PAIVALVTGA (195 aa). Residues serine 241, histidine 268, and aspartate 365 contribute to the active site.

The protein belongs to the CheB family. In terms of processing, phosphorylated by CheA. Phosphorylation of the N-terminal regulatory domain activates the methylesterase activity.

Its subcellular location is the cytoplasm. It carries out the reaction [protein]-L-glutamate 5-O-methyl ester + H2O = L-glutamyl-[protein] + methanol + H(+). The enzyme catalyses L-glutaminyl-[protein] + H2O = L-glutamyl-[protein] + NH4(+). In terms of biological role, involved in chemotaxis. Part of a chemotaxis signal transduction system that modulates chemotaxis in response to various stimuli. Catalyzes the demethylation of specific methylglutamate residues introduced into the chemoreceptors (methyl-accepting chemotaxis proteins or MCP) by CheR. Also mediates the irreversible deamidation of specific glutamine residues to glutamic acid. The protein is Protein-glutamate methylesterase/protein-glutamine glutaminase of Moorella thermoacetica (strain ATCC 39073 / JCM 9320).